Consider the following 420-residue polypeptide: L-rhamnose isomerase (420 aa).

His-264, Asp-296, and Asp-298 together coordinate Mn(2+).

The protein belongs to the rhamnose isomerase family. The cofactor is Mn(2+).

Its subcellular location is the cytoplasm. The enzyme catalyses L-rhamnopyranose = L-rhamnulose. It participates in carbohydrate degradation; L-rhamnose degradation; glycerone phosphate from L-rhamnose: step 1/3. Functionally, catalyzes the interconversion of L-rhamnose and L-rhamnulose. The sequence is that of L-rhamnose isomerase from Listeria monocytogenes serotype 4b (strain F2365).